A 358-amino-acid chain; its full sequence is F-box/kelch-repeat protein SKIP4 (358 aa).

The F-box domain maps to 20-67 (ALISGVPDDISKSCLARVPREYHMAMKCVSRRWRDFVCSDEMCDYRNE). 6 Kelch repeats span residues 78-122 (LCRD…VLGK), 123-171 (RLFV…TLDG), 173-219 (IIAI…VMDG), 220-269 (RIYI…VLDQ), 271-307 (FGAK…SIGN), and 308-355 (SIFV…SCKS).

In terms of assembly, part of a SCF (SKP1-cullin-F-box) protein ligase complex. Interacts with SKP1A/ASK1.

It participates in protein modification; protein ubiquitination. The protein is F-box/kelch-repeat protein SKIP4 (SKIP4) of Arabidopsis thaliana (Mouse-ear cress).